The sequence spans 263 residues: Phosphatidylglycerol--prolipoprotein diacylglyceryl transferase (263 aa).

The next 4 helical transmembrane spans lie at 6–26, 50–70, 85–105, and 112–132; these read VIFS…VLGI, LLTA…VLIY, TWEG…AVII, and IPIF…LFLG. Arginine 133 contacts a 1,2-diacyl-sn-glycero-3-phospho-(1'-sn-glycerol). Helical transmembrane passes span 169 to 189, 197 to 217, and 233 to 253; these read LYEA…LFFL, GALT…VEFF, and MGQL…LGAL.

It belongs to the Lgt family.

It is found in the cell membrane. It catalyses the reaction L-cysteinyl-[prolipoprotein] + a 1,2-diacyl-sn-glycero-3-phospho-(1'-sn-glycerol) = an S-1,2-diacyl-sn-glyceryl-L-cysteinyl-[prolipoprotein] + sn-glycerol 1-phosphate + H(+). It participates in protein modification; lipoprotein biosynthesis (diacylglyceryl transfer). In terms of biological role, catalyzes the transfer of the diacylglyceryl group from phosphatidylglycerol to the sulfhydryl group of the N-terminal cysteine of a prolipoprotein, the first step in the formation of mature lipoproteins. This chain is Phosphatidylglycerol--prolipoprotein diacylglyceryl transferase, found in Wolbachia sp. subsp. Drosophila simulans (strain wRi).